Reading from the N-terminus, the 327-residue chain is Movement protein (327 aa).

Residues 297-327 (SASSSNTENELARVSQNIDLLKNKLKEICGE) are a coiled coil.

The protein belongs to the caulimoviridae movement protein family. Homotrimer, through the coiled-coil domain. Interacts with VAP. May interact (via N-terminus) with host prenylated Rab acceptor protein 1D (PRA1D).

The protein localises to the host cell junction. It is found in the host plasmodesma. In terms of biological role, transports viral genome to neighboring plant cells directly through plasmosdesmata, without any budding. The movement protein allows efficient cell to cell propagation, by bypassing the host cell wall barrier. Acts by forming tubules structures that increase the size exclusion limit (SEL) of plasmodesmata, thereby allowing viral ribonucleocapsids to spread directly to neighboring cells. This is Movement protein from Cauliflower mosaic virus (strain Strasbourg) (CaMV).